A 176-amino-acid chain; its full sequence is Peptidyl-prolyl cis-trans isomerase CYP19-3 (176 aa).

The 164-residue stretch at 7–170 folds into the PPIase cyclophilin-type domain; it reads FFDILIGKMK…ERVVIEDCGE (164 aa).

This sequence belongs to the cyclophilin-type PPIase family. As to expression, ubiquitous, with highest levels in flowers and lowest levels in roots.

The protein localises to the cytoplasm. The enzyme catalyses [protein]-peptidylproline (omega=180) = [protein]-peptidylproline (omega=0). Its activity is regulated as follows. Binds cyclosporin A (CsA). CsA mediates some of its effects via an inhibitory action on PPIase. Its function is as follows. PPIases accelerate the folding of proteins. It catalyzes the cis-trans isomerization of proline imidic peptide bonds in oligopeptides. In Arabidopsis thaliana (Mouse-ear cress), this protein is Peptidyl-prolyl cis-trans isomerase CYP19-3 (CYP19-3).